Here is a 258-residue protein sequence, read N- to C-terminus: Phosphate import ATP-binding protein PstB (258 aa).

The ABC transporter domain maps to 5-247 (IETKDLDIYY…ERIFSNPKEK (243 aa)). Residue 37-44 (GPSGCGKS) coordinates ATP.

It belongs to the ABC transporter superfamily. Phosphate importer (TC 3.A.1.7) family. The complex is composed of two ATP-binding proteins (PstB), two transmembrane proteins (PstC and PstA) and a solute-binding protein (PstS).

The protein resides in the cell membrane. The catalysed reaction is phosphate(out) + ATP + H2O = ADP + 2 phosphate(in) + H(+). Its function is as follows. Part of the ABC transporter complex PstSACB involved in phosphate import. Responsible for energy coupling to the transport system. This Cutibacterium acnes (strain DSM 16379 / KPA171202) (Propionibacterium acnes) protein is Phosphate import ATP-binding protein PstB.